Consider the following 175-residue polypeptide: MGTVRAARLCGAILGFLLLQGAFGKPSLITEPLSSNTGNSSSSEPRSSSSPASAGTPDTSQNITPISTTMSLRIREDSTILPSPTSETVLTVAAFGVISFIVILVVVVIILVSVVSLRFKCRKNKESEDPQKPGSSGLSESCSTANGEKDSITLISMKNINMNNSKGCPTAEKVI.

A signal peptide spans 1–24 (MGTVRAARLCGAILGFLLLQGAFG). The Extracellular portion of the chain corresponds to 25-91 (KPSLITEPLS…PSPTSETVLT (67 aa)). The segment at 33-66 (LSSNTGNSSSSEPRSSSSPASAGTPDTSQNITPI) is disordered. The segment covering 34–60 (SSNTGNSSSSEPRSSSSPASAGTPDTS) has biased composition (low complexity). A helical transmembrane segment spans residues 92 to 112 (VAAFGVISFIVILVVVVIILV). At 113-175 (SVVSLRFKCR…KGCPTAEKVI (63 aa)) the chain is on the cytoplasmic side. The tract at residues 124 to 145 (NKESEDPQKPGSSGLSESCSTA) is disordered. A compositionally biased stretch (polar residues) spans 133–145 (PGSSGLSESCSTA). S165 carries the post-translational modification Phosphoserine.

It belongs to the ECSCR family. Interacts with FLNA. Interacts with the 20S proteasome subunit PSMA7. Post-translationally, may be heavily O-glycosylated.

The protein resides in the cell membrane. It is found in the cytoplasm. In terms of biological role, regulates endothelial chemotaxis and tube formation. Has a role in angiogenesis and apoptosis via modulation of the actin cytoskeleton and facilitation of proteasomal degradation of the apoptosis inhibitors BIRC3/IAP1 and BIRC2/IAP2. The protein is Endothelial cell-specific chemotaxis regulator (ECSCR) of Canis lupus familiaris (Dog).